The sequence spans 453 residues: ACT domain-containing protein ACR3 (453 aa).

ACT domains lie at 37–112 (LVKV…SASQ), 130–212 (SIEI…KFAR), 266–341 (VINV…RVSE), and 344–423 (SLEL…VPSR).

In terms of tissue distribution, expressed in roots, cotyledons, rosette and cauline leaves, sepals, style, and pedicels and tips of young developing siliques.

May bind amino acids. The polypeptide is ACT domain-containing protein ACR3 (Arabidopsis thaliana (Mouse-ear cress)).